A 354-amino-acid polypeptide reads, in one-letter code: Holliday junction branch migration complex subunit RuvB (354 aa).

The segment at 4-191 is large ATPase domain (RuvB-L); sequence TDKLAAPARV…FGIVARLEFY (188 aa). Residues leucine 30, arginine 31, glycine 72, lysine 75, threonine 76, threonine 77, 138 to 140, arginine 181, tyrosine 191, and arginine 228 each bind ATP; that span reads EDY. Threonine 76 is a Mg(2+) binding site. A small ATPAse domain (RuvB-S) region spans residues 192 to 262; sequence TAEELARIVT…MADAALAMLD (71 aa). The segment at 265–354 is head domain (RuvB-H); the sequence is RVGFDLMDRK…GDAGELFGDA (90 aa). The DNA site is built by arginine 301, arginine 320, and arginine 325.

Belongs to the RuvB family. Homohexamer. Forms an RuvA(8)-RuvB(12)-Holliday junction (HJ) complex. HJ DNA is sandwiched between 2 RuvA tetramers; dsDNA enters through RuvA and exits via RuvB. An RuvB hexamer assembles on each DNA strand where it exits the tetramer. Each RuvB hexamer is contacted by two RuvA subunits (via domain III) on 2 adjacent RuvB subunits; this complex drives branch migration. In the full resolvosome a probable DNA-RuvA(4)-RuvB(12)-RuvC(2) complex forms which resolves the HJ.

The protein localises to the cytoplasm. The enzyme catalyses ATP + H2O = ADP + phosphate + H(+). Functionally, the RuvA-RuvB-RuvC complex processes Holliday junction (HJ) DNA during genetic recombination and DNA repair, while the RuvA-RuvB complex plays an important role in the rescue of blocked DNA replication forks via replication fork reversal (RFR). RuvA specifically binds to HJ cruciform DNA, conferring on it an open structure. The RuvB hexamer acts as an ATP-dependent pump, pulling dsDNA into and through the RuvAB complex. RuvB forms 2 homohexamers on either side of HJ DNA bound by 1 or 2 RuvA tetramers; 4 subunits per hexamer contact DNA at a time. Coordinated motions by a converter formed by DNA-disengaged RuvB subunits stimulates ATP hydrolysis and nucleotide exchange. Immobilization of the converter enables RuvB to convert the ATP-contained energy into a lever motion, pulling 2 nucleotides of DNA out of the RuvA tetramer per ATP hydrolyzed, thus driving DNA branch migration. The RuvB motors rotate together with the DNA substrate, which together with the progressing nucleotide cycle form the mechanistic basis for DNA recombination by continuous HJ branch migration. Branch migration allows RuvC to scan DNA until it finds its consensus sequence, where it cleaves and resolves cruciform DNA. The polypeptide is Holliday junction branch migration complex subunit RuvB (Cupriavidus taiwanensis (strain DSM 17343 / BCRC 17206 / CCUG 44338 / CIP 107171 / LMG 19424 / R1) (Ralstonia taiwanensis (strain LMG 19424))).